Here is an 871-residue protein sequence, read N- to C-terminus: DNA mismatch repair protein MutS (871 aa).

616-623 lines the ATP pocket; the sequence is GPNMAGKS. Residues 801 to 825 are disordered; sequence ETEKTEESMEGTNLPKKKKEEKTSS.

The protein belongs to the DNA mismatch repair MutS family.

Its function is as follows. This protein is involved in the repair of mismatches in DNA. It is possible that it carries out the mismatch recognition step. This protein has a weak ATPase activity. The polypeptide is DNA mismatch repair protein MutS (Clostridium kluyveri (strain NBRC 12016)).